The following is a 357-amino-acid chain: Probable dual-specificity RNA methyltransferase RlmN (357 aa).

The active-site Proton acceptor is glutamate 95. The 235-residue stretch at 106-340 (NRDRHTVCVS…VSVREEKGTD (235 aa)) folds into the Radical SAM core domain. Cysteine 113 and cysteine 345 form a disulfide bridge. The [4Fe-4S] cluster site is built by cysteine 120, cysteine 124, and cysteine 127. S-adenosyl-L-methionine is bound by residues 172-173 (GE), serine 204, 227-229 (SLH), and asparagine 302. Cysteine 345 serves as the catalytic S-methylcysteine intermediate.

The protein belongs to the radical SAM superfamily. RlmN family. [4Fe-4S] cluster serves as cofactor.

Its subcellular location is the cytoplasm. The enzyme catalyses adenosine(2503) in 23S rRNA + 2 reduced [2Fe-2S]-[ferredoxin] + 2 S-adenosyl-L-methionine = 2-methyladenosine(2503) in 23S rRNA + 5'-deoxyadenosine + L-methionine + 2 oxidized [2Fe-2S]-[ferredoxin] + S-adenosyl-L-homocysteine. It catalyses the reaction adenosine(37) in tRNA + 2 reduced [2Fe-2S]-[ferredoxin] + 2 S-adenosyl-L-methionine = 2-methyladenosine(37) in tRNA + 5'-deoxyadenosine + L-methionine + 2 oxidized [2Fe-2S]-[ferredoxin] + S-adenosyl-L-homocysteine. Its function is as follows. Specifically methylates position 2 of adenine 2503 in 23S rRNA and position 2 of adenine 37 in tRNAs. The sequence is that of Probable dual-specificity RNA methyltransferase RlmN from Desulfitobacterium hafniense (strain Y51).